The sequence spans 367 residues: AdoMet-dependent heme synthase (367 aa).

Residues 15-238 (DGSPTCKLIA…TSMHLKATCA (224 aa)) enclose the Radical SAM core domain. 3 residues coordinate [4Fe-4S] cluster: cysteine 31, cysteine 35, and cysteine 38.

It belongs to the radical SAM superfamily. [4Fe-4S] cluster is required as a cofactor.

It carries out the reaction Fe-coproporphyrin III + 2 S-adenosyl-L-methionine = heme b + 2 5'-deoxyadenosine + 2 L-methionine + 2 CO2. It participates in porphyrin-containing compound metabolism; protoheme biosynthesis. In terms of biological role, involved in siroheme-dependent heme b biosynthesis. Catalyzes the conversion of Fe-coproporphyrin III into heme by the oxidative decarboxylation of two propionate side chains. This Nitratidesulfovibrio vulgaris (strain ATCC 29579 / DSM 644 / CCUG 34227 / NCIMB 8303 / VKM B-1760 / Hildenborough) (Desulfovibrio vulgaris) protein is AdoMet-dependent heme synthase.